The sequence spans 230 residues: Sugar fermentation stimulation protein homolog (230 aa).

It belongs to the SfsA family.

The protein is Sugar fermentation stimulation protein homolog of Clostridium perfringens (strain 13 / Type A).